Reading from the N-terminus, the 776-residue chain is Protein STRUBBELIG-RECEPTOR FAMILY 3 (776 aa).

The signal sequence occupies residues 1-29 (MAAKRSIYCLLLLPLLLSLLIWIPSISLA). The Cytoplasmic segment spans residues 30–35 (ATNPDD). The chain crosses the membrane as a helical span at residues 36-56 (VAAINGLFAALGAPVLPGWIA). Residues 57-316 (SGGDPCGEAW…KGKNSSHTKK (260 aa)) are Extracellular-facing. Asn-72 is a glycosylation site (N-linked (GlcNAc...) asparagine). 6 LRR repeats span residues 99–120 (SIRG…TLPV), 121–143 (TLQH…LGTL), 145–167 (FLND…FQNL), 169–191 (GLIN…MENL), 193–215 (TLTT…QGLP), and 216–236 (LQDL…KLLS). N-linked (GlcNAc...) asparagine glycosylation is present at Asn-179. 2 N-linked (GlcNAc...) asparagine glycosylation sites follow: Asn-248 and Asn-253. A disordered region spans residues 251–311 (MINSTSTAPS…SSENSKGKNS (61 aa)). Over residues 254–268 (STSTAPSLSPSLSPT) the composition is skewed to low complexity. Pro residues predominate over residues 269–284 (KPAPTRPFSGVPPPPN). Residues 298 to 309 (SEGSSSENSKGK) are compositionally biased toward low complexity. Residue Asn-310 is glycosylated (N-linked (GlcNAc...) asparagine). A helical transmembrane segment spans residues 317–337 (IILIAFAGVLVFIILVLAILL). At 338–776 (LLPKCARRRE…RHGSGDSTAD (439 aa)) the chain is on the cytoplasmic side. The tract at residues 355-440 (PHQVGADRGS…PPPPPPPPPP (86 aa)) is disordered. Positions 381-407 (RSEKVQREPFKKAGEEPKVLHDLERLR) are enriched in basic and acidic residues. Residues 426-440 (MPPPPPPPPPPPPPP) show a composition bias toward pro residues. A Protein kinase domain is found at 485–763 (FAQENLIGSG…EVVQDLLDMI (279 aa)). ATP is bound by residues 491-499 (IGSGMLGSV) and Lys-513.

Belongs to the protein kinase superfamily. Ser/Thr protein kinase family. As to expression, expressed in seedlings, roots, stems, leaves, flowers and siliques.

It localises to the membrane. Not essential for epidermal patterning and not redundant with STRUBBELIG. This chain is Protein STRUBBELIG-RECEPTOR FAMILY 3 (SRF3), found in Arabidopsis thaliana (Mouse-ear cress).